The following is a 1629-amino-acid chain: Ferredoxin-dependent glutamate synthase 2, chloroplastic (1629 aa).

Residues 1 to 107 (MALQSPGATG…LEDIISERGA (107 aa)) constitute a chloroplast transit peptide. Catalysis depends on Cys-108, which acts as the For GATase activity. The 400-residue stretch at 108-507 (CGVGFIANLE…PGMMISVDLE (400 aa)) folds into the Glutamine amidotransferase type-2 domain. FMN is bound at residue 1186-1243 (LAETQKTLIGNGLRERVIIRVDGGFKSGVDVLIAAAMGADEYGFGTLAMIATGCIMAR). The [3Fe-4S] cluster site is built by Cys-1239, Cys-1245, and Cys-1250. The interval 1599 to 1629 (SEEDTPEANSDHILKTTTGDEEQVSSTLAEK) is disordered.

The protein belongs to the glutamate synthase family. The cofactor is [3Fe-4S] cluster. It depends on FAD as a cofactor. FMN is required as a cofactor. In terms of tissue distribution, expressed predominantly in roots and slightly in leaves. Low expression in the leaf mesophyll and phloem companion cell-sieve element complex.

It localises to the plastid. The protein resides in the chloroplast stroma. The catalysed reaction is 2 oxidized [2Fe-2S]-[ferredoxin] + 2 L-glutamate = L-glutamine + 2 reduced [2Fe-2S]-[ferredoxin] + 2-oxoglutarate + 2 H(+). It functions in the pathway amino-acid biosynthesis; L-glutamate biosynthesis via GLT pathway; L-glutamate from 2-oxoglutarate and L-glutamine (ferredoxin route): step 1/1. It participates in energy metabolism; nitrogen metabolism. Functionally, may play a role in primary nitrogen assimilation in roots. Could supply a constitutive level of glutamate to maintain a basal level of protein synthesis. This chain is Ferredoxin-dependent glutamate synthase 2, chloroplastic (GLU2), found in Arabidopsis thaliana (Mouse-ear cress).